We begin with the raw amino-acid sequence, 141 residues long: Envelope glycoprotein L (141 aa).

Residues 1 to 19 form the signal peptide; the sequence is MKWLLGAYVCLCLANILNA. The segment at 21-131 is interaction with gH; the sequence is IPNPCCNVFA…TSAIKFKSKY (111 aa).

Belongs to the herpesviridae glycoprotein L family. Interacts with glycoprotein H (gH); this interaction is necessary for the correct processing and cell surface expression of gH. The heterodimer gH/gL seems to interact with gB trimers during fusion.

The protein resides in the virion membrane. It localises to the host cell membrane. The protein localises to the host Golgi apparatus. It is found in the host trans-Golgi network. Its function is as follows. The heterodimer glycoprotein H-glycoprotein L is required for the fusion of viral and plasma membranes leading to virus entry into the host cell. Acts as a functional inhibitor of gH and maintains gH in an inhibited form. Upon binding to host integrins, gL dissociates from gH leading to activation of the viral fusion glycoproteins gB and gH. In Saimiriine herpesvirus 2 (strain 11) (SaHV-2), this protein is Envelope glycoprotein L.